We begin with the raw amino-acid sequence, 201 residues long: Large ribosomal subunit protein uL4 (201 aa).

Residues 44-73 are disordered; the sequence is RAQKSRAEVKASRKKPWRQKGTGRARAGSV. Basic residues predominate over residues 55–66; sequence SRKKPWRQKGTG.

It belongs to the universal ribosomal protein uL4 family. As to quaternary structure, part of the 50S ribosomal subunit.

Functionally, one of the primary rRNA binding proteins, this protein initially binds near the 5'-end of the 23S rRNA. It is important during the early stages of 50S assembly. It makes multiple contacts with different domains of the 23S rRNA in the assembled 50S subunit and ribosome. Its function is as follows. Forms part of the polypeptide exit tunnel. The polypeptide is Large ribosomal subunit protein uL4 (Hamiltonella defensa subsp. Acyrthosiphon pisum (strain 5AT)).